A 445-amino-acid chain; its full sequence is GTPase Der (445 aa).

EngA-type G domains are found at residues 3–166 (PVIA…AERV) and 180–353 (IRIG…ESCY). Residues 9-16 (GRPNVGKS), 56-60 (DTGGI), 118-121 (NKTD), 186-193 (GRPNVGKS), 233-237 (DTAGI), and 298-301 (NKWD) contribute to the GTP site. The 85-residue stretch at 354–438 (AKWTTNRLTR…PIIFEFKSAE (85 aa)) folds into the KH-like domain.

It belongs to the TRAFAC class TrmE-Era-EngA-EngB-Septin-like GTPase superfamily. EngA (Der) GTPase family. As to quaternary structure, associates with the 50S ribosomal subunit.

Its function is as follows. GTPase that plays an essential role in the late steps of ribosome biogenesis. This Marinomonas sp. (strain MWYL1) protein is GTPase Der.